A 121-amino-acid chain; its full sequence is Large ribosomal subunit protein uL14 (121 aa).

This sequence belongs to the universal ribosomal protein uL14 family. As to quaternary structure, part of the 50S ribosomal subunit. Forms a cluster with proteins L3 and L19. In the 70S ribosome, L14 and L19 interact and together make contacts with the 16S rRNA in bridges B5 and B8.

Binds to 23S rRNA. Forms part of two intersubunit bridges in the 70S ribosome. This chain is Large ribosomal subunit protein uL14, found in Synechococcus sp. (strain RCC307).